We begin with the raw amino-acid sequence, 205 residues long: Guanylate kinase (205 aa).

Residues 7-185 (GNIFIISAAS…AEEDLRHIVN (179 aa)) form the Guanylate kinase-like domain. An ATP-binding site is contributed by 14–21 (AASGTGKT).

It belongs to the guanylate kinase family.

It localises to the cytoplasm. It carries out the reaction GMP + ATP = GDP + ADP. Essential for recycling GMP and indirectly, cGMP. The sequence is that of Guanylate kinase (gmk) from Neisseria meningitidis serogroup A / serotype 4A (strain DSM 15465 / Z2491).